A 260-amino-acid chain; its full sequence is Carbonic anhydrase (260 aa).

A disordered region spans residues 1 to 31 (MAHAWGYGPADGPESWAESFPIANGPRQSPI). The region spanning 3–259 (HAWGYGPADG…LKGRKVRASF (257 aa)) is the Alpha-carbonic anhydrase domain. The active-site Proton acceptor is the H64. Residues H94, H96, and H119 each coordinate Zn(2+). Residue Y127 is part of the active site. 198 to 199 (TT) serves as a coordination point for substrate.

Belongs to the alpha-carbonic anhydrase family. The cofactor is Zn(2+).

It catalyses the reaction hydrogencarbonate + H(+) = CO2 + H2O. In terms of biological role, reversible hydration of carbon dioxide. The chain is Carbonic anhydrase (cahz) from Danio rerio (Zebrafish).